The sequence spans 200 residues: Small ribosomal subunit protein uS4c (200 aa).

The 61-residue stretch at 88-148 (IRLDNTIFNL…PKSYYIFKLC (61 aa)) folds into the S4 RNA-binding domain.

It belongs to the universal ribosomal protein uS4 family. In terms of assembly, part of the 30S ribosomal subunit.

Its subcellular location is the plastid. The protein localises to the apicoplast. Its function is as follows. One of the primary rRNA binding proteins, it binds directly to 16S rRNA where it nucleates assembly of the body of the 30S subunit. This Eimeria tenella (Coccidian parasite) protein is Small ribosomal subunit protein uS4c (rps4).